The sequence spans 204 residues: Thymidine kinase (204 aa).

ATP contacts are provided by residues 23 to 30 (GSMFSGKT) and 95 to 98 (DEAQ). Residue E96 is the Proton acceptor of the active site. The Zn(2+) site is built by C152, C155, C184, and C187.

This sequence belongs to the thymidine kinase family. In terms of assembly, homotetramer.

The protein resides in the cytoplasm. The catalysed reaction is thymidine + ATP = dTMP + ADP + H(+). This Porphyromonas gingivalis (strain ATCC BAA-308 / W83) protein is Thymidine kinase.